A 213-amino-acid chain; its full sequence is MTKGSVFIIMGPPGSGKGTQSQYLANRIGLPHISTGDLLRAIIREGTPNGLKAKAYLDKGAFVPSDFVWEILKEKLQSQACSKGCIIDGFPRTLDQAHLLDSFLMDVHSNYTVIFLEISEDEILKRVCSRFLCPSCSRIYNTSQGHTECPDCHVPLIRRSDDTPEIIKERLTKYQERTAPVIAYYDSLGKLCRVSSENKEDLVFEDILKCIYK.

14 to 19 (GSGKGT) contacts ATP. An NMP region spans residues 34 to 63 (STGDLLRAIIREGTPNGLKAKAYLDKGAFV). Residues T35, R40, 61 to 63 (AFV), 89 to 92 (GFPR), and Q96 each bind AMP. The LID stretch occupies residues 129–162 (SRFLCPSCSRIYNTSQGHTECPDCHVPLIRRSDD). R130 contacts ATP. Zn(2+)-binding residues include C133 and C136. 139–140 (IY) contributes to the ATP binding site. Positions 149 and 152 each coordinate Zn(2+). 2 residues coordinate AMP: R159 and R170. Position 198 (N198) interacts with ATP.

This sequence belongs to the adenylate kinase family. Monomer.

It is found in the cytoplasm. The catalysed reaction is AMP + ATP = 2 ADP. It functions in the pathway purine metabolism; AMP biosynthesis via salvage pathway; AMP from ADP: step 1/1. Its function is as follows. Catalyzes the reversible transfer of the terminal phosphate group between ATP and AMP. Plays an important role in cellular energy homeostasis and in adenine nucleotide metabolism. This Chlamydia pneumoniae (Chlamydophila pneumoniae) protein is Adenylate kinase.